Here is a 106-residue protein sequence, read N- to C-terminus: Oncosphere antigen B (106 aa).

Positions 11–106 constitute a Fibronectin type-III domain; that stretch reads LPQHFRWSQV…QSELRSMCIK (96 aa).

This chain is Oncosphere antigen B (ONCB), found in Hydatigena taeniaeformis (Feline tapeworm).